We begin with the raw amino-acid sequence, 119 residues long: Large ribosomal subunit protein uL18 (119 aa).

It belongs to the universal ribosomal protein uL18 family. Part of the 50S ribosomal subunit; part of the 5S rRNA/L5/L18/L25 subcomplex. Contacts the 5S and 23S rRNAs.

This is one of the proteins that bind and probably mediate the attachment of the 5S RNA into the large ribosomal subunit, where it forms part of the central protuberance. This chain is Large ribosomal subunit protein uL18, found in Borrelia duttonii (strain Ly).